A 660-amino-acid chain; its full sequence is Probable serine/threonine-protein kinase CE0033 (660 aa).

The Protein kinase domain maps to Tyr9 to Leu278. ATP is bound by residues Ile15–Val23 and Lys38. Asp136 serves as the catalytic Proton acceptor. A disordered region spans residues Arg288 to Ala319. 3 consecutive PASTA domains span residues Ser377–Ser443, Gly444–Thr512, and Gly513–Asn577.

This sequence belongs to the protein kinase superfamily. Ser/Thr protein kinase family.

The catalysed reaction is L-seryl-[protein] + ATP = O-phospho-L-seryl-[protein] + ADP + H(+). It catalyses the reaction L-threonyl-[protein] + ATP = O-phospho-L-threonyl-[protein] + ADP + H(+). This Corynebacterium efficiens (strain DSM 44549 / YS-314 / AJ 12310 / JCM 11189 / NBRC 100395) protein is Probable serine/threonine-protein kinase CE0033.